The following is an 842-amino-acid chain: Translation initiation factor IF-2 (842 aa).

Disordered stretches follow at residues 1–41 (MVAK…GFPD) and 112–219 (RPNR…QTYQ). 2 stretches are compositionally biased toward basic and acidic residues: residues 32 to 41 (PEDKKQGFPD) and 153 to 165 (RRGE…RDFS). The 170-residue stretch at 328–497 (ARPPVVTVMG…MLQAEVMELR (170 aa)) folds into the tr-type G domain. Positions 337–344 (GHVDHGKT) are G1. Residue 337 to 344 (GHVDHGKT) participates in GTP binding. The interval 362–366 (GITQH) is G2. The interval 383–386 (DTPG) is G3. GTP-binding positions include 383–387 (DTPGH) and 437–440 (NKID). A G4 region spans residues 437-440 (NKID). The interval 473-475 (SAL) is G5.

This sequence belongs to the TRAFAC class translation factor GTPase superfamily. Classic translation factor GTPase family. IF-2 subfamily.

The protein localises to the cytoplasm. Functionally, one of the essential components for the initiation of protein synthesis. Protects formylmethionyl-tRNA from spontaneous hydrolysis and promotes its binding to the 30S ribosomal subunits. Also involved in the hydrolysis of GTP during the formation of the 70S ribosomal complex. This Treponema pallidum (strain Nichols) protein is Translation initiation factor IF-2 (infB).